Consider the following 835-residue polypeptide: Ubiquitin carboxyl-terminal hydrolase 26 (835 aa).

Residues 102–128 are disordered; it reads SQGSIRPARSDERCGEPSTSAQELNGS. Positions 118–128 are enriched in polar residues; it reads PSTSAQELNGS. Residues 286-816 form the USP domain; it reads QGLPNVGNTC…TGYVFFYMHN (531 aa). Cysteine 295 serves as the catalytic Nucleophile. The disordered stretch occupies residues 597–747; it reads NRESEAQSGK…TRKVDPTKLN (151 aa). 2 stretches are compositionally biased toward basic and acidic residues: residues 634–652 and 669–679; these read LTKE…RPSD and KCNEGRSDKQI. The span at 683 to 708 shows a compositional bias: polar residues; sequence ALTQSRPKPISQEQTENLGKTTLSHT. Over residues 709–725 the composition is skewed to low complexity; that stretch reads QDSSQSSQSSSDSSKSS. Residues 726–747 show a composition bias toward basic and acidic residues; the sequence is RCSDDLDKKAKPTRKVDPTKLN. The active-site Proton acceptor is the histidine 771.

This sequence belongs to the peptidase C19 family. In terms of assembly, interacts with RING1.

Its subcellular location is the nucleus. The protein resides in the cytoplasm. It localises to the cytoskeleton. The protein localises to the flagellum axoneme. It carries out the reaction Thiol-dependent hydrolysis of ester, thioester, amide, peptide and isopeptide bonds formed by the C-terminal Gly of ubiquitin (a 76-residue protein attached to proteins as an intracellular targeting signal).. In terms of biological role, deubiquitinase regulating several biological processes through the deubiquitination of components of these processes. Involved in somatic cell reprogramming through the 'Lys-48'-linked deubiquitination and stabilization of CBX4 and CBX6, two components of the polycomb-repressive complex 1 (PRC1). Also deubiquitinates and probably stabilizes the androgen receptor (AR), regulating the androgen receptor signaling pathway. May play a role in spermatogenesis. The chain is Ubiquitin carboxyl-terminal hydrolase 26 from Mus musculus (Mouse).